We begin with the raw amino-acid sequence, 117 residues long: Hainantoxin-XV-3 (117 aa).

The signal sequence occupies residues 1–20; it reads MKLCAVIIASLLVCVAVASS. The disordered stretch occupies residues 20 to 55; that stretch reads SSDNQKEFAQEKEMTREETQSLGEHEKDDEVTGSEE. Positions 21–56 are excised as a propeptide; sequence SDNQKEFAQEKEMTREETQSLGEHEKDDEVTGSEER. Residues 23 to 55 show a composition bias toward basic and acidic residues; it reads NQKEFAQEKEMTREETQSLGEHEKDDEVTGSEE. 4 disulfides stabilise this stretch: Cys-58-Cys-72, Cys-65-Cys-78, Cys-69-Cys-115, and Cys-71-Cys-91.

It belongs to the neurotoxin 03 (Tx2) family. 02 subfamily. HNTX-XV sub-subfamily. Expressed by the venom gland.

The protein localises to the secreted. Functionally, putative ion channel inhibitor. The protein is Hainantoxin-XV-3 of Cyriopagopus hainanus (Chinese bird spider).